A 269-amino-acid polypeptide reads, in one-letter code: Peptide deformylase 1A, chloroplastic/mitochondrial (269 aa).

Residues 1-60 (MGLHRDEATAMETLFRVSLRLLPVSAAVTCRSIRFPVSRPGSSHLLNRKLYNLPTSSSSS) constitute a chloroplast and mitochondrion transit peptide. Substrate is bound by residues 123-126 (PGVG) and G187. A Zn(2+)-binding site is contributed by C188. The segment at 191–196 (VDGFRA) is dimerization. Residue H230 participates in Zn(2+) binding. E231 is a catalytic residue. H234 serves as a coordination point for Zn(2+). A dimerization region spans residues 236-254 (DGNLYVDKMVPRTFRTVDN).

The protein belongs to the polypeptide deformylase family. As to quaternary structure, homodimer. It depends on Zn(2+) as a cofactor. Expressed in roots, leaves, flowers and siliques.

The protein localises to the plastid. It localises to the chloroplast stroma. It is found in the mitochondrion. It catalyses the reaction N-terminal N-formyl-L-methionyl-[peptide] + H2O = N-terminal L-methionyl-[peptide] + formate. Inhibited by actinonin. Functionally, removes the formyl group from the N-terminal Met of newly synthesized proteins. This is Peptide deformylase 1A, chloroplastic/mitochondrial (PDF1A) from Arabidopsis thaliana (Mouse-ear cress).